The primary structure comprises 151 residues: MNWAPATCWALLLAAAFLCDSGAAKGGRGGARGSARGGVRGGARGASRVRVRPAQRYGAPGSSLRVAAAGAAAGAAAGAAAGLAAGSGWRRAAGPGERGLEDEEDGVPGGNGTGPGIYSYRAWTSGAGPTRGPRLCLVLGGALGALGLLRP.

An N-terminal signal peptide occupies residues 1–24; the sequence is MNWAPATCWALLLAAAFLCDSGAA. Residues 89–113 form a disordered region; sequence WRRAAGPGERGLEDEEDGVPGGNGT. Asparagine 111 carries an N-linked (GlcNAc...) asparagine glycan. A lipid anchor (GPI-anchor amidated glycine) is attached at glycine 126. A propeptide spans 127–151 (removed in mature form); the sequence is AGPTRGPRLCLVLGGALGALGLLRP.

Belongs to the SPRN family. In terms of processing, N-glycosylated. In terms of tissue distribution, mainly expressed in brain. In brain, it is expressed in hippocampus.

The protein localises to the cell membrane. In terms of biological role, prion-like protein that has PrP(C)-like neuroprotective activity. May act as a modulator for the biological actions of normal and abnormal PrP. This Homo sapiens (Human) protein is Shadow of prion protein (SPRN).